Consider the following 199-residue polypeptide: dITP/XTP pyrophosphatase (199 aa).

7–12 is a binding site for substrate; it reads TSNRGK. The Proton acceptor role is filled by aspartate 74. Aspartate 74 contributes to the Mg(2+) binding site. Residues serine 75, 156 to 159, lysine 179, and 184 to 185 contribute to the substrate site; these read FGYD and HR.

It belongs to the HAM1 NTPase family. Homodimer. Requires Mg(2+) as cofactor.

The enzyme catalyses XTP + H2O = XMP + diphosphate + H(+). It carries out the reaction dITP + H2O = dIMP + diphosphate + H(+). It catalyses the reaction ITP + H2O = IMP + diphosphate + H(+). Pyrophosphatase that catalyzes the hydrolysis of nucleoside triphosphates to their monophosphate derivatives, with a high preference for the non-canonical purine nucleotides XTP (xanthosine triphosphate), dITP (deoxyinosine triphosphate) and ITP. Seems to function as a house-cleaning enzyme that removes non-canonical purine nucleotides from the nucleotide pool, thus preventing their incorporation into DNA/RNA and avoiding chromosomal lesions. In Sulfurimonas denitrificans (strain ATCC 33889 / DSM 1251) (Thiomicrospira denitrificans (strain ATCC 33889 / DSM 1251)), this protein is dITP/XTP pyrophosphatase.